A 373-amino-acid polypeptide reads, in one-letter code: MSQSLFCDEVLPHISDIQVYQPGKPISEVQREHNLLRISKLASNENPLGASPKAIKAVQSELINMGRYPDGNSFYLKQDLADFLQKQPTEIALGNGSNELLELVARIFAGKGDEIIYSQYAFAVYSISTQAVGATGIEVPAKEWGHDLEAMAEAITDKTKLIYLANPNNPTGTLFTQKEWEAFISKVPSNVIVVLDEAYTEYVTHDEYANGLNYLEQYPNLIVSRTFSKAYGLAALRIGYMVANEELIAYINRLRAPFNINHLAQVAAKAALKDPMFVKKTVDLNTQGMQTLTQFFEEKGLSYIPSQGNFVCVDLGPDSLKINQALLKEGVIVRPVAPEGKFSEFLRISIGLPNENQHFMAALNKILTSSNFK.

Lysine 229 bears the N6-(pyridoxal phosphate)lysine mark.

Belongs to the class-II pyridoxal-phosphate-dependent aminotransferase family. Histidinol-phosphate aminotransferase subfamily. As to quaternary structure, homodimer. Pyridoxal 5'-phosphate is required as a cofactor.

It carries out the reaction L-histidinol phosphate + 2-oxoglutarate = 3-(imidazol-4-yl)-2-oxopropyl phosphate + L-glutamate. Its pathway is amino-acid biosynthesis; L-histidine biosynthesis; L-histidine from 5-phospho-alpha-D-ribose 1-diphosphate: step 7/9. The polypeptide is Histidinol-phosphate aminotransferase 2 (Hydrogenovibrio crunogenus (strain DSM 25203 / XCL-2) (Thiomicrospira crunogena)).